Consider the following 342-residue polypeptide: tRNA dimethylallyltransferase (342 aa).

39–46 (GPTGSGKT) provides a ligand contact to ATP. 41–46 (TGSGKT) serves as a coordination point for substrate. The segment at 64-67 (DSMQ) is interaction with substrate tRNA.

The protein belongs to the IPP transferase family. Monomer. It depends on Mg(2+) as a cofactor.

The enzyme catalyses adenosine(37) in tRNA + dimethylallyl diphosphate = N(6)-dimethylallyladenosine(37) in tRNA + diphosphate. Catalyzes the transfer of a dimethylallyl group onto the adenine at position 37 in tRNAs that read codons beginning with uridine, leading to the formation of N6-(dimethylallyl)adenosine (i(6)A). The protein is tRNA dimethylallyltransferase of Chlamydia felis (strain Fe/C-56) (Chlamydophila felis).